The sequence spans 182 residues: Receptor activity-modifying protein 2 (182 aa).

The signal sequence occupies residues 1–45 (MAPLRVERAPGGSQLAVTSAQRPAALRLPPLLLLLLLLLLGAVST). Residues 46 to 150 (SPESLNQSHP…VQPTFSDPPE (105 aa)) are Extracellular-facing. Residues Asn-51, Asn-92, and Asn-137 are each glycosylated (N-linked (GlcNAc...) asparagine). 2 cysteine pairs are disulfide-bonded: Cys-76–Cys-106 and Cys-91–Cys-138. Residues 151 to 172 (DVLLAMIIAPICLIPFLVTLVV) traverse the membrane as a helical segment. Residues 173–182 (WRSKDGDAQA) lie on the Cytoplasmic side of the membrane.

This sequence belongs to the RAMP family. As to quaternary structure, heterodimer of CALCRL and RAMP2; the interaction forms the receptor complex for adrenomedullin/ADM. Heterodimer of CALCR and RAMP2; interaction forms the AMYR2 receptor complex for calcitonin/CALC and amylin/IAPP.

It is found in the cell membrane. Accessory protein that interacts with and modulates the function of G-protein coupled receptors including calcitonin gene-related peptide type 1 receptor (CALCRL) and calcitonin receptor (CALCR). Required for the transport of CALCRL to the plasma membrane. Together with CALCRL, form a receptor complex for adrenomedullin/ADM. Together with CALCR, act as a receptor complex for calcitonin/CT/CALC. Together with CALCR, also act as a receptor complex for amylin/IAPP. In Rattus norvegicus (Rat), this protein is Receptor activity-modifying protein 2.